Reading from the N-terminus, the 67-residue chain is uncharacterized protein (67 aa).

2 helical membrane-spanning segments follow: residues 10–30 (EFFI…IIMW) and 40–60 (LMVG…WMVF).

The protein belongs to the plectrovirus ORF10 family.

The protein resides in the host membrane. This is an uncharacterized protein from Spiroplasma melliferum (SpV1).